Consider the following 493-residue polypeptide: Ketol-acid reductoisomerase (NADP(+)) (493 aa).

Residues 14-208 (LDQLGRCRFM…GGDRAGVLES (195 aa)) form the KARI N-terminal Rossmann domain. NADP(+)-binding positions include 45 to 48 (CGAQ), arginine 68, arginine 76, serine 78, and 108 to 110 (DKQ). Residue histidine 132 is part of the active site. Glycine 158 is a binding site for NADP(+). KARI C-terminal knotted domains are found at residues 209 to 345 (SFVA…SPKA) and 346 to 486 (DGIK…MTDM). Positions 217, 221, 390, and 394 each coordinate Mg(2+). Serine 415 provides a ligand contact to substrate.

This sequence belongs to the ketol-acid reductoisomerase family. The cofactor is Mg(2+).

The enzyme catalyses (2R)-2,3-dihydroxy-3-methylbutanoate + NADP(+) = (2S)-2-acetolactate + NADPH + H(+). The catalysed reaction is (2R,3R)-2,3-dihydroxy-3-methylpentanoate + NADP(+) = (S)-2-ethyl-2-hydroxy-3-oxobutanoate + NADPH + H(+). It participates in amino-acid biosynthesis; L-isoleucine biosynthesis; L-isoleucine from 2-oxobutanoate: step 2/4. The protein operates within amino-acid biosynthesis; L-valine biosynthesis; L-valine from pyruvate: step 2/4. In terms of biological role, involved in the biosynthesis of branched-chain amino acids (BCAA). Catalyzes an alkyl-migration followed by a ketol-acid reduction of (S)-2-acetolactate (S2AL) to yield (R)-2,3-dihydroxy-isovalerate. In the isomerase reaction, S2AL is rearranged via a Mg-dependent methyl migration to produce 3-hydroxy-3-methyl-2-ketobutyrate (HMKB). In the reductase reaction, this 2-ketoacid undergoes a metal-dependent reduction by NADPH to yield (R)-2,3-dihydroxy-isovalerate. This chain is Ketol-acid reductoisomerase (NADP(+)), found in Actinobacillus pleuropneumoniae serotype 3 (strain JL03).